Consider the following 689-residue polypeptide: Glycine--tRNA ligase beta subunit (689 aa).

The protein belongs to the class-II aminoacyl-tRNA synthetase family. In terms of assembly, tetramer of two alpha and two beta subunits.

It is found in the cytoplasm. The catalysed reaction is tRNA(Gly) + glycine + ATP = glycyl-tRNA(Gly) + AMP + diphosphate. The sequence is that of Glycine--tRNA ligase beta subunit from Acinetobacter baumannii (strain ATCC 17978 / DSM 105126 / CIP 53.77 / LMG 1025 / NCDC KC755 / 5377).